The primary structure comprises 244 residues: ATP synthase subunit 4, mitochondrial (244 aa).

The transit peptide at 1–36 (MSSKLFCLRSFPSVQRTAWQRLVLPSTRKFSLTPTT) directs the protein to the mitochondrion.

Belongs to the eukaryotic ATPase B chain family. F-type ATPases have 2 components, CF(1) - the catalytic core - and CF(0) - the membrane proton channel. In yeast, the dimeric form of ATP synthase consists of 17 polypeptides: alpha, beta, gamma, delta, epsilon, 4 (B), 5 (OSCP), 6 (A), 8, 9 (C), d, E (Tim11), f, g, h, i/j and k.

Its subcellular location is the mitochondrion. It localises to the mitochondrion inner membrane. Mitochondrial membrane ATP synthase (F(1)F(0) ATP synthase or Complex V) produces ATP from ADP in the presence of a proton gradient across the membrane which is generated by electron transport complexes of the respiratory chain. F-type ATPases consist of two structural domains, F(1) - containing the extramembraneous catalytic core, and F(0) - containing the membrane proton channel, linked together by a central stalk and a peripheral stalk. During catalysis, ATP synthesis in the catalytic domain of F(1) is coupled via a rotary mechanism of the central stalk subunits to proton translocation. Part of the complex F(0) domain and the peripheric stalk, which acts as a stator to hold the catalytic alpha(3)beta(3) subcomplex and subunit a/ATP6 static relative to the rotary elements. The protein is ATP synthase subunit 4, mitochondrial (atp4) of Schizosaccharomyces pombe (strain 972 / ATCC 24843) (Fission yeast).